The sequence spans 3149 residues: Large tegument protein deneddylase (3149 aa).

Polar residues predominate over residues 1–13 (MSNGDWGQSQRTR). The disordered stretch occupies residues 1-30 (MSNGDWGQSQRTRGTGPVRGIRTMDVNAPG). The deubiquitination activity stretch occupies residues 1-268 (MSNGDWGQSQ…YEANGSGFDL (268 aa)). Positions 41 to 258 (LGTASCNQAH…MLEHYGVYDF (218 aa)) constitute a Peptidase C76 domain. Active-site residues include Cys61, Asp193, and His195. The tract at residues 319 to 341 (PAARYSPAKTNSPPSSPASAAPA) is disordered. 8 consecutive repeat copies span residues 335-339 (PASAA), 340-344 (PASAA), 345-349 (PASAA), 350-354 (PASAA), 355-359 (PASAA), 360-364 (PASAA), 365-369 (PASAA), and 370-374 (PASAA). Residues 335–374 (PASAAPASAAPASAAPASAAPASAAPASAAPASAAPASAA) form an 8 X 5 AA repeats of P-A-S-A-A region. 8 disordered regions span residues 382–656 (FIPI…GSGL), 901–923 (LLSG…SIYR), 1143–1166 (APIS…TPPL), 1412–1434 (GRKE…RARE), 1644–1677 (PEAT…SALW), 2583–2839 (GLVS…PTAV), 2852–2981 (AAAS…PGAR), and 2995–3019 (QTYT…KCKD). Pro residues predominate over residues 462 to 483 (LPPPVIPIPHQSPPASPTPHPA). Low complexity-rich tracts occupy residues 509–536 (AAPS…TTTL) and 544–564 (QPPQ…QPTP). Positions 554 to 584 (SPLLPQQQPTPSAAPAPSPLLPQQQPPPSAA) are interaction with inner tegument protein. Pro residues predominate over residues 565–609 (SAAPAPSPLLPQQQPPPSAARAPSPLPPQQQPLPSATPAPPPAQQ). Positions 1143-1155 (APISPASPSATPA) are enriched in low complexity. Residues 2592–2603 (SADNTPASSDRL) show a composition bias toward polar residues. A compositionally biased stretch (pro residues) spans 2711–2720 (QPAPQQPPSS). 2 stretches are compositionally biased toward polar residues: residues 2734–2745 (SPHSTPSTASGS) and 2784–2804 (SAAS…SSQD). The span at 2812–2827 (MQREKKQQGGREEAAE) shows a compositional bias: basic and acidic residues. Positions 2874–2885 (APALGSGLAAPA) are enriched in low complexity.

The protein belongs to the herpesviridae large tegument protein family. As to quaternary structure, interacts with host CUL1 and CUL4A; these interactions inhibit the E3 ligase activity of cullins. Interacts with inner tegument protein. Interacts with capsid vertex specific component CVC2. Interacts with the major capsid protein/MCP. Interacts with host TRIM25 and YWHAZ.

It is found in the virion tegument. The protein resides in the host cytoplasm. Its subcellular location is the host nucleus. It catalyses the reaction Thiol-dependent hydrolysis of ester, thioester, amide, peptide and isopeptide bonds formed by the C-terminal Gly of ubiquitin (a 76-residue protein attached to proteins as an intracellular targeting signal).. In terms of biological role, large tegument protein that plays multiple roles in the viral cycle. During viral entry, remains associated with the capsid while most of the tegument is detached and participates in the capsid transport toward the host nucleus. Plays a role in the routing of the capsid at the nuclear pore complex and subsequent uncoating. Within the host nucleus, acts as a deneddylase and promotes the degradation of nuclear CRLs (cullin-RING ubiquitin ligases) and thereby stabilizes nuclear CRL substrates, while cytoplasmic CRLs remain unaffected. These modifications prevent host cell cycle S-phase progression and create a favorable environment allowing efficient viral genome replication. Participates later in the secondary envelopment of capsids. Indeed, plays a linker role for the association of the outer viral tegument to the capsids together with the inner tegument protein. Counteracts host TLR-mediated NF-kappa-B activation through both MYD88 and TICAM1-dependent pathways by interfering with 'Lys-63'- and 'Lys-48'-linked ubiquitination of signaling intermediates such as TRAF6 and IKBKG. Inhibits type I interferon production by forming a tri-molecular complex with host TRIM25 and 14-3-3 thereby promoting TRIM25 autoubiquitination and sequestration of the ligase into inactive protein aggregates. In turn, host RIGI is recruited to the complex but ubiquitination is severely impaired leading to inhibition of the pathway. Also catalyzes the removal of 'Lys-48'- and 'Lys-63'-linked ubiquitin chains on host TBK1 and STING1 suppressing cGAS-STING signaling in addition to the RIGI-MAVS pathway. Inhibits selective autophagy by deubiquitinating host SQSTM1. In turn, decreased SQSTM1 ubiquitination fails to recruit LC3 to SQSTM1-positive aggregates. In the host nucleus, deubiquitinates topoisomerase II subunits TOP2A and TOP2B thereby stabilizing SUMOylated TOP2 which halts the DNA damage response to TOP2-induced double strand DNA breaks and promotes cell survival. This chain is Large tegument protein deneddylase, found in Epstein-Barr virus (strain B95-8) (HHV-4).